A 392-amino-acid chain; its full sequence is ESX-1 secretion-associated protein EspA (392 aa).

Positions 302-392 (TRQALRPRAD…GQKVLVRNVV (91 aa)) are disordered. Residues 334-344 (QGMGGPVGMGG) are compositionally biased toward gly residues.

In terms of assembly, homodimer; disulfide-linked.

Its subcellular location is the secreted. Required for secretion of EsxA (ESAT-6) and EsxB (CFP-10) and for virulence. This chain is ESX-1 secretion-associated protein EspA, found in Mycobacterium tuberculosis (strain CDC 1551 / Oshkosh).